Here is a 274-residue protein sequence, read N- to C-terminus: HTH-type transcriptional regulator GadX (274 aa).

The 98-residue stretch at 145-242 (TRVCTVINNN…GMTPTEYQER (98 aa)) folds into the HTH araC/xylS-type domain. DNA-binding regions (H-T-H motif) lie at residues 162-183 (ARIA…REEE) and 209-232 (IKRV…RNYY).

As to quaternary structure, homodimer.

Functionally, positively regulates the expression of about fifteen genes involved in acid resistance such as gadA, gadB and gadC. Depending on the conditions (growth phase and medium), can repress gadW. The sequence is that of HTH-type transcriptional regulator GadX (gadX) from Shigella flexneri.